The chain runs to 263 residues: Proteasome subunit alpha type-1 (263 aa).

Met1 carries the post-translational modification N-acetylmethionine. Ser110 bears the Phosphoserine; alternate mark. A glycan (O-linked (GlcNAc) serine; alternate) is linked at Ser110. Residue Lys115 forms a Glycyl lysine isopeptide (Lys-Gly) (interchain with G-Cter in ubiquitin) linkage. Ser177 is modified (phosphoserine). Lys208 is covalently cross-linked (Glycyl lysine isopeptide (Lys-Gly) (interchain with G-Cter in ubiquitin)). Residues 232–263 form a disordered region; that stretch reads FLDGLEERPQRKAQPSQAADEPAEKADEPMEH. A compositionally biased stretch (basic and acidic residues) spans 253–263; the sequence is PAEKADEPMEH.

It belongs to the peptidase T1A family. The 26S proteasome consists of a 20S proteasome core and two 19S regulatory subunits. The 20S proteasome core is a barrel-shaped complex made of 28 subunits that are arranged in four stacked rings. The two outer rings are each formed by seven alpha subunits, and the two inner rings are formed by seven beta subunits. The proteolytic activity is exerted by three beta-subunits PSMB5, PSMB6 and PSMB7. Interacts with NOTCH3. Interacts with ZFAND1. In terms of processing, proteolytically cleaved from a C-terminal extension in the course of the conversion of the proteasome from its latent form into its active form. As to expression, ubiquitous.

The protein resides in the cytoplasm. It is found in the nucleus. In terms of biological role, component of the 20S core proteasome complex involved in the proteolytic degradation of most intracellular proteins. This complex plays numerous essential roles within the cell by associating with different regulatory particles. Associated with two 19S regulatory particles, forms the 26S proteasome and thus participates in the ATP-dependent degradation of ubiquitinated proteins. The 26S proteasome plays a key role in the maintenance of protein homeostasis by removing misfolded or damaged proteins that could impair cellular functions, and by removing proteins whose functions are no longer required. Associated with the PA200 or PA28, the 20S proteasome mediates ubiquitin-independent protein degradation. This type of proteolysis is required in several pathways including spermatogenesis (20S-PA200 complex) or generation of a subset of MHC class I-presented antigenic peptides (20S-PA28 complex). The sequence is that of Proteasome subunit alpha type-1 (Psma1) from Rattus norvegicus (Rat).